Consider the following 184-residue polypeptide: Putative pre-16S rRNA nuclease (184 aa).

The segment at 1-23 (MFSSQHRLLYQPSGPDLSKNLDP) is disordered.

The protein belongs to the YqgF nuclease family.

It is found in the cytoplasm. Its function is as follows. Could be a nuclease involved in processing of the 5'-end of pre-16S rRNA. This chain is Putative pre-16S rRNA nuclease, found in Mycobacterium leprae (strain Br4923).